A 286-amino-acid chain; its full sequence is MKNRLFDMLIYGFLLMFALICVLPFIHVIAASFATVEEVVSKKFILIPTTFSLDAYRYIFSTDIIYKSLLVSVFVTVIGTAVSMFLSSLMAYGLSRRDLIGRQPLMFLVVFTMLFSGGMIPTFLVVKSLGLLDSYWALILPTAINAFNLIILKNFFQNIPSSLEESAKIDGCNDLGIFFKIVLPLSLPAIATISLFYAVTYWNTYMTAILYLNDSAKWPIQVLLRQIVIVSSGMQGDMSEMGSGSPPPEQTIKMAVIVVATIPVLLVYPFIQKHFAKGALLGSVKG.

6 consecutive transmembrane segments (helical) span residues 9–29 (LIYG…IHVI), 69–89 (LLVS…LSSL), 106–126 (MFLV…FLVV), 131–151 (LLDS…NLII), 176–196 (GIFF…ISLF), and 251–271 (TIKM…YPFI). Residues 69–271 (LLVSVFVTVI…IPVLLVYPFI (203 aa)) form the ABC transmembrane type-1 domain.

Belongs to the binding-protein-dependent transport system permease family. CysTW subfamily. As to quaternary structure, the complex is probably composed of two ATP-binding proteins (MsmX), two transmembrane proteins (YtcP and YteP) and a solute-binding protein (YtcQ).

It localises to the cell membrane. In terms of biological role, involved in pectin degradation. Part of the ABC transporter complex YtcQP-YteP involved in the uptake of polygalacturonan and rhamnogalacturonan type I. Responsible for the translocation of the substrate across the membrane. The protein is Polygalacturonan/rhamnogalacturonan transport system permease protein YtcP (ytcP) of Bacillus subtilis (strain 168).